Here is a 479-residue protein sequence, read N- to C-terminus: Sulfate adenylyltransferase subunit 1 (479 aa).

Residues 25–239 (KSLLRFLTCG…EVLETVDIQR (215 aa)) enclose the tr-type G domain. Residues 34-41 (GSVDDGKS) form a G1 region. Residue 34-41 (GSVDDGKS) coordinates GTP. The segment at 92–96 (GITID) is G2. Residues 113-116 (DTPG) are G3. GTP contacts are provided by residues 113–117 (DTPGH) and 168–171 (NKMD). The interval 168–171 (NKMD) is G4. The G5 stretch occupies residues 206–208 (SAL).

The protein belongs to the TRAFAC class translation factor GTPase superfamily. Classic translation factor GTPase family. CysN/NodQ subfamily. As to quaternary structure, heterodimer composed of CysD, the smaller subunit, and CysN.

It catalyses the reaction sulfate + ATP + H(+) = adenosine 5'-phosphosulfate + diphosphate. The protein operates within sulfur metabolism; hydrogen sulfide biosynthesis; sulfite from sulfate: step 1/3. With CysD forms the ATP sulfurylase (ATPS) that catalyzes the adenylation of sulfate producing adenosine 5'-phosphosulfate (APS) and diphosphate, the first enzymatic step in sulfur assimilation pathway. APS synthesis involves the formation of a high-energy phosphoric-sulfuric acid anhydride bond driven by GTP hydrolysis by CysN coupled to ATP hydrolysis by CysD. This is Sulfate adenylyltransferase subunit 1 from Salmonella dublin (strain CT_02021853).